Here is a 103-residue protein sequence, read N- to C-terminus: Protein S100-A16 (103 aa).

The EF-hand 1; degenerate domain occupies V12–N47. Residues G54–P89 enclose the EF-hand 2 domain. Residues D67, N69, D71, R73, and E78 each coordinate Ca(2+).

It belongs to the S-100 family. Homodimer. Interacts with TP53.

It localises to the nucleus. It is found in the nucleolus. The protein localises to the cytoplasm. In terms of biological role, calcium-binding protein. Binds one calcium ion per monomer. Can promote differentiation of adipocytes (in vitro). Overexpression in preadipocytes increases their proliferation, enhances adipogenesis and reduces insulin-stimulated glucose uptake. In Bos taurus (Bovine), this protein is Protein S100-A16 (S100A16).